The following is a 201-amino-acid chain: FMN-dependent NADH:quinone oxidoreductase (201 aa).

FMN is bound by residues S10, 16 to 18 (SQS), 96 to 99 (MYNF), and 140 to 143 (SRGG).

Belongs to the azoreductase type 1 family. Homodimer. It depends on FMN as a cofactor.

It carries out the reaction 2 a quinone + NADH + H(+) = 2 a 1,4-benzosemiquinone + NAD(+). The catalysed reaction is N,N-dimethyl-1,4-phenylenediamine + anthranilate + 2 NAD(+) = 2-(4-dimethylaminophenyl)diazenylbenzoate + 2 NADH + 2 H(+). Its function is as follows. Quinone reductase that provides resistance to thiol-specific stress caused by electrophilic quinones. Also exhibits azoreductase activity. Catalyzes the reductive cleavage of the azo bond in aromatic azo compounds to the corresponding amines. In Salmonella arizonae (strain ATCC BAA-731 / CDC346-86 / RSK2980), this protein is FMN-dependent NADH:quinone oxidoreductase.